We begin with the raw amino-acid sequence, 409 residues long: Argininosuccinate synthase (409 aa).

ATP-binding positions include 13–21 (AYSGGLDTS) and Ala40. L-citrulline-binding residues include Tyr91 and Ser96. An ATP-binding site is contributed by Gly121. L-aspartate contacts are provided by Thr123, Asn127, and Asp128. Asn127 provides a ligand contact to L-citrulline. Residues Arg131, Ser183, Ser192, Glu268, and Tyr280 each contribute to the L-citrulline site.

This sequence belongs to the argininosuccinate synthase family. Type 1 subfamily. In terms of assembly, homotetramer.

The protein localises to the cytoplasm. The catalysed reaction is L-citrulline + L-aspartate + ATP = 2-(N(omega)-L-arginino)succinate + AMP + diphosphate + H(+). The protein operates within amino-acid biosynthesis; L-arginine biosynthesis; L-arginine from L-ornithine and carbamoyl phosphate: step 2/3. The protein is Argininosuccinate synthase of Saccharophagus degradans (strain 2-40 / ATCC 43961 / DSM 17024).